A 504-amino-acid chain; its full sequence is Ectoine/proline transporter ProP (504 aa).

Transmembrane regions (helical) follow at residues 41–61, 71–91, 118–138, 169–189, 207–227, 272–292, 309–329, 337–357, 362–382, 399–419, and 430–450; these read FMEWYDFGIYGYLTVTMTAVF, LLAVMFGFAVSYLVRPLGGLV, LIGLLPTAASIGAWALVLLYL, FFGAFLDMGSYLGFAAGASVV, DFGWRIPFLTAIPLGIIAVYL, LLIGIAIVAATNTAGYALTSY, AAVTVPILVVMSLLLPFVGMW, PVYATAVAATLILMVPAFLIM, IGAVLIALSMVAIPTGLYVAL, GMGISYNISVSLFGGTTPLIT, and IVPALYIMFFSAIAGVALLFM. A disordered region spans residues 477 to 504; it reads NQDEDPNIDLSHMPFPDEENVGAEKQNA.

It belongs to the major facilitator superfamily.

The protein resides in the cell membrane. With respect to regulation, uptake is activated by osmotic stress. Inhibited by CCCP. Its function is as follows. Involved in the uptake of osmoprotectants. Can transport ectoine and proline. Protons are probably the coupling ions. This chain is Ectoine/proline transporter ProP, found in Corynebacterium glutamicum (strain ATCC 13032 / DSM 20300 / JCM 1318 / BCRC 11384 / CCUG 27702 / LMG 3730 / NBRC 12168 / NCIMB 10025 / NRRL B-2784 / 534).